Here is a 111-residue protein sequence, read N- to C-terminus: Disintegrin CV-11-alpha (111 aa).

The signal sequence occupies residues 1–20 (MIQVLLVIICLAVFPYQGSS). A propeptide spanning residues 21–46 (IILESGNVNDFELVYPKKVTVLPTGA) is cleaved from the precursor. One can recognise a Disintegrin domain in the interval 47–111 (MNSAHPCCDP…SDCPRNPWKD (65 aa)). 4 disulfide bridges follow: C53–C76, C67–C73, C72–C97, and C85–C104. The short motif at 89–91 (KGD) is the Cell attachment site element.

The protein belongs to the disintegrin family. Dimeric disintegrin subfamily. In terms of assembly, heterodimer with subunit beta; disulfide-linked. As to expression, expressed by the venom gland.

It is found in the secreted. Its function is as follows. Inhibits ADP-induced human platelet aggregation. Antagonist of alpha-IIb/beta-3 (ITGA2B/ITGB3). In Cerastes vipera (Sahara sand viper), this protein is Disintegrin CV-11-alpha.